The primary structure comprises 262 residues: Phosphomannomutase 1 (262 aa).

A2 is modified (N-acetylalanine). D19 functions as the Nucleophile in the catalytic mechanism. Residues D19 and D21 each contribute to the Mg(2+) site. Residue D21 is the Proton donor/acceptor of the active site. Residues R28, R132, R143, R150, M186, S188, and D190 each contribute to the alpha-D-mannose 1-phosphate site. Positions 218, 230, 232, and 235 each coordinate Mg(2+). S242 is subject to Phosphoserine.

Belongs to the eukaryotic PMM family. In terms of assembly, homodimer. Mg(2+) is required as a cofactor. Strong expression in liver, heart, brain, and pancreas; lower expression in skeletal muscle.

Its subcellular location is the cytoplasm. It catalyses the reaction alpha-D-mannose 1-phosphate = D-mannose 6-phosphate. Its pathway is nucleotide-sugar biosynthesis; GDP-alpha-D-mannose biosynthesis; alpha-D-mannose 1-phosphate from D-fructose 6-phosphate: step 2/2. IMP, a metabolite whose concentration is elevated in anoxia, inhibits phosphomannomutase and phosphoglucomutase activities and strongly enhances glucose-1,6-bisphosphatase activity. Involved in the synthesis of the GDP-mannose and dolichol-phosphate-mannose required for a number of critical mannosyl transfer reactions. In addition, may be responsible for the degradation of glucose-1,6-bisphosphate in ischemic brain. This Homo sapiens (Human) protein is Phosphomannomutase 1 (PMM1).